Reading from the N-terminus, the 144-residue chain is Cell division protein SepF (144 aa).

Polar residues predominate over residues 21–38 (TDLQGTKTTDEVSPTSRP). The tract at residues 21–40 (TDLQGTKTTDEVSPTSRPDN) is disordered.

The protein belongs to the SepF family. In terms of assembly, homodimer. Interacts with FtsZ.

It is found in the cytoplasm. Functionally, cell division protein that is part of the divisome complex and is recruited early to the Z-ring. Probably stimulates Z-ring formation, perhaps through the cross-linking of FtsZ protofilaments. Its function overlaps with FtsA. This chain is Cell division protein SepF, found in Latilactobacillus sakei subsp. sakei (strain 23K) (Lactobacillus sakei subsp. sakei).